The chain runs to 131 residues: D-ribose pyranase (131 aa).

Residue histidine 20 is the Proton donor of the active site. Substrate contacts are provided by residues aspartate 28, histidine 98, and tyrosine 120–asparagine 122.

This sequence belongs to the RbsD / FucU family. RbsD subfamily. Homodecamer.

It localises to the cytoplasm. It catalyses the reaction beta-D-ribopyranose = beta-D-ribofuranose. It participates in carbohydrate metabolism; D-ribose degradation; D-ribose 5-phosphate from beta-D-ribopyranose: step 1/2. Functionally, catalyzes the interconversion of beta-pyran and beta-furan forms of D-ribose. In Bacillus cereus (strain B4264), this protein is D-ribose pyranase.